We begin with the raw amino-acid sequence, 156 residues long: Small ribosomal subunit protein uS7 (156 aa).

It belongs to the universal ribosomal protein uS7 family. Part of the 30S ribosomal subunit. Contacts proteins S9 and S11.

In terms of biological role, one of the primary rRNA binding proteins, it binds directly to 16S rRNA where it nucleates assembly of the head domain of the 30S subunit. Is located at the subunit interface close to the decoding center, probably blocks exit of the E-site tRNA. The chain is Small ribosomal subunit protein uS7 from Streptococcus pneumoniae (strain Taiwan19F-14).